The primary structure comprises 115 residues: uncharacterized protein (115 aa).

Positions 1–20 are cleaved as a signal peptide; the sequence is MKTFFRTVLFGSLMAVCANS.

This is an uncharacterized protein from Escherichia coli O6:H1 (strain CFT073 / ATCC 700928 / UPEC).